We begin with the raw amino-acid sequence, 478 residues long: Transposon Ty1-H Gag polyprotein (478 aa).

Composition is skewed to polar residues over residues 1 to 10 (MESQQLSNYP), 48 to 60 (TKAN…TPAS), and 127 to 152 (QSQF…GNTF). 3 disordered regions span residues 1–84 (MESQ…QNGP), 126–174 (PQSQ…PPPM), and 390–478 (GSRN…PETY). Residues 153 to 165 (TDSSSADSDMTST) show a composition bias toward low complexity. Residues 337–439 (NNGIHINNKV…NSKSKTARAH (103 aa)) form an RNA-binding region. Over residues 440–456 (NVSTSNNSPSTDNDSIS) the composition is skewed to low complexity. Polar residues predominate over residues 457–466 (KSTTEPIQLN). Residues 467–478 (NKHDLHLRPETY) are compositionally biased toward basic and acidic residues.

In terms of assembly, homotrimer.

It is found in the cytoplasm. Functionally, capsid protein (CA) is the structural component of the virus-like particle (VLP), forming the shell that encapsulates the retrotransposons dimeric RNA genome. The particles are assembled from trimer-clustered units and there are holes in the capsid shells that allow for the diffusion of macromolecules. CA also has nucleocapsid-like chaperone activity, promoting primer tRNA(i)-Met annealing to the multipartite primer-binding site (PBS), dimerization of Ty1 RNA and initiation of reverse transcription. In Saccharomyces cerevisiae (strain ATCC 204508 / S288c) (Baker's yeast), this protein is Transposon Ty1-H Gag polyprotein (TY1A-H).